The primary structure comprises 99 residues: Large ribosomal subunit protein uL23 (99 aa).

The protein belongs to the universal ribosomal protein uL23 family. In terms of assembly, part of the 50S ribosomal subunit. Contacts protein L29, and trigger factor when it is bound to the ribosome.

Its function is as follows. One of the early assembly proteins it binds 23S rRNA. One of the proteins that surrounds the polypeptide exit tunnel on the outside of the ribosome. Forms the main docking site for trigger factor binding to the ribosome. This is Large ribosomal subunit protein uL23 from Magnetococcus marinus (strain ATCC BAA-1437 / JCM 17883 / MC-1).